Here is a 495-residue protein sequence, read N- to C-terminus: MRRSMPLAQLLPDIPQARDVVISGLVMDSREVQPGDAFVAVAGFGVHGLCFIEDACARGAVAILFEPPAPQGVSVPDGAIAVHGLRARLGAMADRFHGHPSQAMTMVGVTGTNGKTSTVQLLAQAWHRLGVRSATCGTLGVGLYDQLVPTGFTTPLVLQLHQCLGQLRDDGAQAVAMEVSSHALDQGRVDGVHYDVAVFTNLTRDHLDYHGDMEHYGEAKARLFAHQDVQAAVINVDDLFGLRLLHGLANGVRRVGVSVCGHTDADVMAQHLSLNLQGIGFDLVIGADRAPVRSPLMGRFNVDNLLTVAGVLYALDYALSEIAAVLSTLRPIHGRMNRLGGQDGQPVVVVDYAHTPDALGQVLSSLSSHVCGRLICVFGCGGERDRGKRSQMAVIAESNADVVLVTDDNPRGEDGDGIVADILAGFVRPNLVKVQRDRSAAIAAAIGIASAGDVVLIAGKGHERYQEVAGVRHPFDDTEVAMRVLAAMSAQETVR.

Ser29 contributes to the UDP-N-acetyl-alpha-D-muramoyl-L-alanyl-D-glutamate binding site. 111–117 (GTNGKTS) is a binding site for ATP. UDP-N-acetyl-alpha-D-muramoyl-L-alanyl-D-glutamate is bound by residues 153–154 (TT), Ser180, Gln186, and Arg188. At Lys220 the chain carries N6-carboxylysine. Residues Arg384, 408–411 (DNPR), Gly459, and Glu463 each bind meso-2,6-diaminopimelate. The Meso-diaminopimelate recognition motif signature appears at 408–411 (DNPR).

Belongs to the MurCDEF family. MurE subfamily. Requires Mg(2+) as cofactor. In terms of processing, carboxylation is probably crucial for Mg(2+) binding and, consequently, for the gamma-phosphate positioning of ATP.

Its subcellular location is the cytoplasm. The catalysed reaction is UDP-N-acetyl-alpha-D-muramoyl-L-alanyl-D-glutamate + meso-2,6-diaminopimelate + ATP = UDP-N-acetyl-alpha-D-muramoyl-L-alanyl-gamma-D-glutamyl-meso-2,6-diaminopimelate + ADP + phosphate + H(+). The protein operates within cell wall biogenesis; peptidoglycan biosynthesis. In terms of biological role, catalyzes the addition of meso-diaminopimelic acid to the nucleotide precursor UDP-N-acetylmuramoyl-L-alanyl-D-glutamate (UMAG) in the biosynthesis of bacterial cell-wall peptidoglycan. The sequence is that of UDP-N-acetylmuramoyl-L-alanyl-D-glutamate--2,6-diaminopimelate ligase from Xylella fastidiosa (strain Temecula1 / ATCC 700964).